The primary structure comprises 167 residues: Peptide deformylase (167 aa).

Fe cation is bound by residues cysteine 91 and histidine 133. Glutamate 134 is a catalytic residue. A Fe cation-binding site is contributed by histidine 137.

It belongs to the polypeptide deformylase family. The cofactor is Fe(2+).

The catalysed reaction is N-terminal N-formyl-L-methionyl-[peptide] + H2O = N-terminal L-methionyl-[peptide] + formate. Functionally, removes the formyl group from the N-terminal Met of newly synthesized proteins. Requires at least a dipeptide for an efficient rate of reaction. N-terminal L-methionine is a prerequisite for activity but the enzyme has broad specificity at other positions. In Chromobacterium violaceum (strain ATCC 12472 / DSM 30191 / JCM 1249 / CCUG 213 / NBRC 12614 / NCIMB 9131 / NCTC 9757 / MK), this protein is Peptide deformylase.